A 130-amino-acid polypeptide reads, in one-letter code: DNA-directed RNA polymerase subunit omega (130 aa).

A disordered region spans residues 80–130 (PEPDTVPLIGSAGASVDADDTEVAPERMTEEELLKGLEGLAPPEEQPEEDE). The span at 103 to 114 (APERMTEEELLK) shows a compositional bias: basic and acidic residues.

Belongs to the RNA polymerase subunit omega family. In terms of assembly, the RNAP catalytic core consists of 2 alpha, 1 beta, 1 beta' and 1 omega subunit. When a sigma factor is associated with the core the holoenzyme is formed, which can initiate transcription.

The catalysed reaction is RNA(n) + a ribonucleoside 5'-triphosphate = RNA(n+1) + diphosphate. Its function is as follows. Promotes RNA polymerase assembly. Latches the N- and C-terminal regions of the beta' subunit thereby facilitating its interaction with the beta and alpha subunits. This is DNA-directed RNA polymerase subunit omega from Rhodopseudomonas palustris (strain BisB18).